Reading from the N-terminus, the 248-residue chain is tRNA pseudouridine synthase A (248 aa).

Aspartate 53 (nucleophile) is an active-site residue. Tyrosine 111 contacts substrate.

This sequence belongs to the tRNA pseudouridine synthase TruA family. In terms of assembly, homodimer.

It carries out the reaction uridine(38/39/40) in tRNA = pseudouridine(38/39/40) in tRNA. In terms of biological role, formation of pseudouridine at positions 38, 39 and 40 in the anticodon stem and loop of transfer RNAs. This is tRNA pseudouridine synthase A from Listeria monocytogenes serotype 4a (strain HCC23).